The following is a 943-amino-acid chain: Protein translocase subunit SecA (943 aa).

Residues glutamine 90, 108-112, and aspartate 509 each bind ATP; that span reads GEGKT. The disordered stretch occupies residues 534 to 561; it reads KPDNEHKPPIPQQRNSKSGGGFSANVDS.

The protein belongs to the SecA family. Monomer and homodimer. Part of the essential Sec protein translocation apparatus which comprises SecA, SecYEG and auxiliary proteins SecDF. Other proteins may also be involved.

It is found in the cell inner membrane. It localises to the cellular thylakoid membrane. Its subcellular location is the cytoplasm. It catalyses the reaction ATP + H2O + cellular proteinSide 1 = ADP + phosphate + cellular proteinSide 2.. Functionally, part of the Sec protein translocase complex. Interacts with the SecYEG preprotein conducting channel. Has a central role in coupling the hydrolysis of ATP to the transfer of proteins into and across the cell membrane, serving as an ATP-driven molecular motor driving the stepwise translocation of polypeptide chains across the membrane. In terms of biological role, probably participates in protein translocation into and across both the cytoplasmic and thylakoid membranes in cyanobacterial cells. The chain is Protein translocase subunit SecA from Prochlorococcus marinus subsp. pastoris (strain CCMP1986 / NIES-2087 / MED4).